The primary structure comprises 302 residues: tRNA-cytidine(32) 2-sulfurtransferase (302 aa).

Residues 45–50 (SGGKDS) carry the PP-loop motif motif. [4Fe-4S] cluster contacts are provided by cysteine 120, cysteine 123, and cysteine 211.

This sequence belongs to the TtcA family. In terms of assembly, homodimer. Requires Mg(2+) as cofactor. [4Fe-4S] cluster serves as cofactor.

The protein resides in the cytoplasm. The enzyme catalyses cytidine(32) in tRNA + S-sulfanyl-L-cysteinyl-[cysteine desulfurase] + AH2 + ATP = 2-thiocytidine(32) in tRNA + L-cysteinyl-[cysteine desulfurase] + A + AMP + diphosphate + H(+). It functions in the pathway tRNA modification. In terms of biological role, catalyzes the ATP-dependent 2-thiolation of cytidine in position 32 of tRNA, to form 2-thiocytidine (s(2)C32). The sulfur atoms are provided by the cysteine/cysteine desulfurase (IscS) system. The polypeptide is tRNA-cytidine(32) 2-sulfurtransferase (Aeromonas hydrophila subsp. hydrophila (strain ATCC 7966 / DSM 30187 / BCRC 13018 / CCUG 14551 / JCM 1027 / KCTC 2358 / NCIMB 9240 / NCTC 8049)).